Here is a 303-residue protein sequence, read N- to C-terminus: Probable 5-dehydro-4-deoxyglucarate dehydratase (303 aa).

The protein belongs to the DapA family.

It catalyses the reaction 5-dehydro-4-deoxy-D-glucarate + H(+) = 2,5-dioxopentanoate + CO2 + H2O. It functions in the pathway carbohydrate acid metabolism; D-glucarate degradation; 2,5-dioxopentanoate from D-glucarate: step 2/2. The polypeptide is Probable 5-dehydro-4-deoxyglucarate dehydratase (Pseudomonas putida (strain GB-1)).